Reading from the N-terminus, the 176-residue chain is Transcriptional repressor NrdR (176 aa).

A zinc finger lies at 3-34 (CPFCQHTDSRVLESRSAEAGQSVRRRRECLQC). One can recognise an ATP-cone domain in the interval 49-139 (ITVIKRNQDR…VYRQFRGIRD (91 aa)). Positions 151-176 (GDGPLPSVLDEPYEDTAQPTIMISPQ) are disordered. A compositionally biased stretch (polar residues) spans 167–176 (AQPTIMISPQ).

The protein belongs to the NrdR family. It depends on Zn(2+) as a cofactor.

In terms of biological role, negatively regulates transcription of bacterial ribonucleotide reductase nrd genes and operons by binding to NrdR-boxes. This is Transcriptional repressor NrdR from Acaryochloris marina (strain MBIC 11017).